Here is an 867-residue protein sequence, read N- to C-terminus: Leucine--tRNA ligase (867 aa).

A 'HIGH' region motif is present at residues 40 to 51 (PYPSGAGLHVGH). The 'KMSKS' region motif lies at 638-642 (KMSKS). An ATP-binding site is contributed by Lys641.

The protein belongs to the class-I aminoacyl-tRNA synthetase family.

The protein localises to the cytoplasm. The enzyme catalyses tRNA(Leu) + L-leucine + ATP = L-leucyl-tRNA(Leu) + AMP + diphosphate. This is Leucine--tRNA ligase from Leptospira biflexa serovar Patoc (strain Patoc 1 / Ames).